Reading from the N-terminus, the 160-residue chain is Twist-related protein 2 (160 aa).

The interval 1–63 (MEEGSSSPVS…GSPSAQSFEE (63 aa)) is disordered. Basic residues predominate over residues 27–37 (KRFGRKRRYSK). Residues 66–117 (SQRILANVRERQRTQSLNEAFAALRKIIPTLPSDKLSKIQTLKLAARYIDFL) enclose the bHLH domain.

In terms of assembly, efficient DNA binding requires dimerization with another bHLH protein. Forms a heterodimer with TCF3/E12. Also interacts with MEF2C. In the embryo, highly expressed in chondrogenic cells. In embryonic skin, expressed in the undifferentiated mesenchymal layer beneath the epidermis which later develops into the dermis. Expressed in early myeloid cells but not in lymphoid cells in the liver. Expression also detected in the secretory ependymal epithelium of the choroid plexus primordium. In the adult, expressed in secreting glandular tissues and tubules.

It is found in the nucleus. Its subcellular location is the cytoplasm. In terms of biological role, binds to the E-box consensus sequence 5'-CANNTG-3' as a heterodimer and inhibits transcriptional activation by MYOD1, MYOG, MEF2A and MEF2C. Also represses expression of pro-inflammatory cytokines such as TNFA and IL1B. Involved in postnatal glycogen storage and energy metabolism. Inhibits the premature or ectopic differentiation of preosteoblast cells during osteogenesis, possibly by changing the internal signal transduction response of osteoblasts to external growth factors. The sequence is that of Twist-related protein 2 (TWIST2) from Homo sapiens (Human).